A 366-amino-acid chain; its full sequence is Alanine racemase (366 aa).

The active-site Proton acceptor; specific for D-alanine is lysine 40. The residue at position 40 (lysine 40) is an N6-(pyridoxal phosphate)lysine. Arginine 136 contributes to the substrate binding site. Tyrosine 263 functions as the Proton acceptor; specific for L-alanine in the catalytic mechanism. Methionine 310 lines the substrate pocket.

It belongs to the alanine racemase family. Pyridoxal 5'-phosphate serves as cofactor.

The catalysed reaction is L-alanine = D-alanine. It participates in amino-acid biosynthesis; D-alanine biosynthesis; D-alanine from L-alanine: step 1/1. Catalyzes the interconversion of L-alanine and D-alanine. May also act on other amino acids. This is Alanine racemase (alr) from Streptococcus pyogenes serotype M6 (strain ATCC BAA-946 / MGAS10394).